Consider the following 545-residue polypeptide: Chaperonin GroEL (545 aa).

Residues 29–32 (TLGP), Lys50, 86–90 (DGTTT), Gly415, and Asp495 contribute to the ATP site.

The protein belongs to the chaperonin (HSP60) family. As to quaternary structure, forms a cylinder of 14 subunits composed of two heptameric rings stacked back-to-back. Interacts with the co-chaperonin GroES.

It is found in the cytoplasm. It carries out the reaction ATP + H2O + a folded polypeptide = ADP + phosphate + an unfolded polypeptide.. Together with its co-chaperonin GroES, plays an essential role in assisting protein folding. The GroEL-GroES system forms a nano-cage that allows encapsulation of the non-native substrate proteins and provides a physical environment optimized to promote and accelerate protein folding. The chain is Chaperonin GroEL from Porphyromonas gingivalis (strain ATCC 33277 / DSM 20709 / CIP 103683 / JCM 12257 / NCTC 11834 / 2561).